We begin with the raw amino-acid sequence, 71 residues long: Equinin B (71 aa).

The N-terminal stretch at 1-11 (MAVIMVDQAEG) is a signal peptide. A propeptide spanning residues 46–71 (GDEPQQMALDDESDPLVILPNNYNDY) is cleaved from the precursor.

Post-translationally, contains 4 disulfide bonds.

It is found in the secreted. Its subcellular location is the target cell membrane. Antimicrobial peptide with inhibitory activity against both Gram-positive and Gram-negative bacteria (E.coli (MIC=0.25 ug/ml), M.lysodeikticus (MIC=0.25 ug/ml), and V.alginolyticus (MIC=0.25 ug/ml)). Does not show hemolytic activity. The chain is Equinin B from Actinia equina (Beadlet anemone).